A 382-amino-acid chain; its full sequence is MAKQDFYEILGVPKTAEEREIKKAYKRLAMKFHPDRNQGDKEAEAKFKEIKEAYEILTDAQKRAAYDQYGHAAFEQGGMGGGGYGGGGFGGGGADFGDIFGDVFGDIFGGGRGRQRASRGADLRYNMELTLEEAVRGVTKEIRIPTLEECDICHGSGAKVGTKPQTCPTCHGSGQVQIRQGFFAVQQACPHCHGRGTLIKDPCNKCHGHGRVEKTKTLSVKIPAGVDTGDRIRLAGEGEAGEHGAQAGDLYVQVQVKQHAIFEREGNNLYCEVPINFAMAALGGEIEVPTLDGRVNLKVPGETQTGKLFRMRGRGVKSVRGGAQGDLLCRVVVETPVGLNDKQKQLLKELQESFGGPTGENNSPRSKSFFDGVKKFFDDLTR.

In terms of domain architecture, J spans 5–70 (DFYEILGVPK…QKRAAYDQYG (66 aa)). The CR-type zinc-finger motif lies at 137–215 (GVTKEIRIPT…CHGHGRVEKT (79 aa)). Positions 150, 153, 167, 170, 189, 192, 203, and 206 each coordinate Zn(2+). 4 CXXCXGXG motif repeats span residues 150–157 (CDICHGSG), 167–174 (CPTCHGSG), 189–196 (CPHCHGRG), and 203–210 (CNKCHGHG).

Belongs to the DnaJ family. Homodimer. It depends on Zn(2+) as a cofactor.

The protein resides in the cytoplasm. Functionally, participates actively in the response to hyperosmotic and heat shock by preventing the aggregation of stress-denatured proteins and by disaggregating proteins, also in an autonomous, DnaK-independent fashion. Unfolded proteins bind initially to DnaJ; upon interaction with the DnaJ-bound protein, DnaK hydrolyzes its bound ATP, resulting in the formation of a stable complex. GrpE releases ADP from DnaK; ATP binding to DnaK triggers the release of the substrate protein, thus completing the reaction cycle. Several rounds of ATP-dependent interactions between DnaJ, DnaK and GrpE are required for fully efficient folding. Also involved, together with DnaK and GrpE, in the DNA replication of plasmids through activation of initiation proteins. The polypeptide is Chaperone protein DnaJ (Enterobacter sp. (strain 638)).